The primary structure comprises 78 residues: Hainantoxin-XX.3 (78 aa).

An N-terminal signal peptide occupies residues 1–23 (MKSATLLALSFLLIASCFLICEA). The propeptide occupies 24–47 (EHSRYEEHEILEENMGDVVNLEQR). 3 disulfides stabilise this stretch: C49–C62, C56–C66, and C61–C77.

It belongs to the hainantoxin family. 20 subfamily. In terms of tissue distribution, expressed by the venom gland.

Its subcellular location is the secreted. Putative ion channel inhibitor. This is Hainantoxin-XX.3 from Cyriopagopus hainanus (Chinese bird spider).